Here is a 256-residue protein sequence, read N- to C-terminus: Thiazole synthase (256 aa).

Catalysis depends on lysine 97, which acts as the Schiff-base intermediate with DXP. 1-deoxy-D-xylulose 5-phosphate-binding positions include glycine 158, 184–185 (AG), and 206–207 (NT).

This sequence belongs to the ThiG family. Homotetramer. Forms heterodimers with either ThiH or ThiS.

It localises to the cytoplasm. It catalyses the reaction [ThiS sulfur-carrier protein]-C-terminal-Gly-aminoethanethioate + 2-iminoacetate + 1-deoxy-D-xylulose 5-phosphate = [ThiS sulfur-carrier protein]-C-terminal Gly-Gly + 2-[(2R,5Z)-2-carboxy-4-methylthiazol-5(2H)-ylidene]ethyl phosphate + 2 H2O + H(+). The protein operates within cofactor biosynthesis; thiamine diphosphate biosynthesis. Functionally, catalyzes the rearrangement of 1-deoxy-D-xylulose 5-phosphate (DXP) to produce the thiazole phosphate moiety of thiamine. Sulfur is provided by the thiocarboxylate moiety of the carrier protein ThiS. In vitro, sulfur can be provided by H(2)S. This Flavobacterium psychrophilum (strain ATCC 49511 / DSM 21280 / CIP 103535 / JIP02/86) protein is Thiazole synthase.